Consider the following 609-residue polypeptide: Proline--tRNA ligase (609 aa).

Belongs to the class-II aminoacyl-tRNA synthetase family. ProS type 1 subfamily. In terms of assembly, homodimer.

Its subcellular location is the cytoplasm. It carries out the reaction tRNA(Pro) + L-proline + ATP = L-prolyl-tRNA(Pro) + AMP + diphosphate. In terms of biological role, catalyzes the attachment of proline to tRNA(Pro) in a two-step reaction: proline is first activated by ATP to form Pro-AMP and then transferred to the acceptor end of tRNA(Pro). As ProRS can inadvertently accommodate and process non-cognate amino acids such as alanine and cysteine, to avoid such errors it has two additional distinct editing activities against alanine. One activity is designated as 'pretransfer' editing and involves the tRNA(Pro)-independent hydrolysis of activated Ala-AMP. The other activity is designated 'posttransfer' editing and involves deacylation of mischarged Ala-tRNA(Pro). The misacylated Cys-tRNA(Pro) is not edited by ProRS. The sequence is that of Proline--tRNA ligase from Synechococcus sp. (strain JA-2-3B'a(2-13)) (Cyanobacteria bacterium Yellowstone B-Prime).